Reading from the N-terminus, the 204-residue chain is Large ribosomal subunit protein eL15B (204 aa).

Residues 165-185 (TATGKKSRGINKGHKFNNTKA) form a disordered region. The segment covering 169 to 185 (KKSRGINKGHKFNNTKA) has biased composition (basic residues).

The protein belongs to the eukaryotic ribosomal protein eL15 family. As to quaternary structure, component of the large ribosomal subunit (LSU). Mature yeast ribosomes consist of a small (40S) and a large (60S) subunit. The 40S small subunit contains 1 molecule of ribosomal RNA (18S rRNA) and 33 different proteins (encoded by 57 genes). The large 60S subunit contains 3 rRNA molecules (25S, 5.8S and 5S rRNA) and 46 different proteins (encoded by 81 genes).

The protein localises to the cytoplasm. Functionally, component of the ribosome, a large ribonucleoprotein complex responsible for the synthesis of proteins in the cell. The small ribosomal subunit (SSU) binds messenger RNAs (mRNAs) and translates the encoded message by selecting cognate aminoacyl-transfer RNA (tRNA) molecules. The large subunit (LSU) contains the ribosomal catalytic site termed the peptidyl transferase center (PTC), which catalyzes the formation of peptide bonds, thereby polymerizing the amino acids delivered by tRNAs into a polypeptide chain. The nascent polypeptides leave the ribosome through a tunnel in the LSU and interact with protein factors that function in enzymatic processing, targeting, and the membrane insertion of nascent chains at the exit of the ribosomal tunnel. This Saccharomyces cerevisiae (strain ATCC 204508 / S288c) (Baker's yeast) protein is Large ribosomal subunit protein eL15B.